The following is a 456-amino-acid chain: Tyrosine phenol-lyase (456 aa).

At Lys-257 the chain carries N6-(pyridoxal phosphate)lysine.

It belongs to the beta-eliminating lyase family. Homotetramer. Pyridoxal 5'-phosphate is required as a cofactor.

The enzyme catalyses L-tyrosine + H2O = phenol + pyruvate + NH4(+). This Citrobacter freundii protein is Tyrosine phenol-lyase (tpl).